The primary structure comprises 513 residues: MATSSSAWLMFSDHYPEILIAIACFLIFSLLLSARSSSKDSLPYNWPIFGMLPAIISNNQFNDFTTARLRKMGWTFIFKGPWLLDMDYIFTCDPSNINHMFNDNFENYPKGELGKVFDIFGNNIFNADGDLWHDHRKMAQTILWDGNYRTMQATFIRNKMDNALIPILDSAACKRKPVDLQDVLLRFTFDTSCFSVLAADPESLTMEFPPVPFSKAADQALDAALTRHITPRLIWKLKRFFNVGSERTLAVAWKVIDSYIYDKIAELKAKRKLVGKINSYDAVSFYMDNFNIHDDKFLRDNAFTYLLAQRNTQSLTMTWLFYALFENPKVELKILSELKSIVDESSERKFNDGFALFDSNMIQSAIYLHATLCEALRIYPPVPFEIKDAHKADVLPSGHKVRAGEKILFSPYAMARMKGIWGDDCLEFKPERWITGNGTLKHEPAYKFFAFSAGPRICLGKELSFTQMKMVVATIIYNFHLQMVKGHVVEQSNSILMDMKHGLMVQVRKRSVM.

A helical membrane pass occupies residues 14-34; that stretch reads HYPEILIAIACFLIFSLLLSA. Residue C458 coordinates heme.

This sequence belongs to the cytochrome P450 family. It depends on heme as a cofactor. In terms of tissue distribution, mostly expressed in stems, and, to a lower extent, in bulbs, roots, leaves and flowers.

The protein localises to the membrane. It catalyses the reaction 4'-O-methylnorbelladine + reduced [NADPH--hemoprotein reductase] + O2 = (10bR,4aS)-noroxomaritidine + oxidized [NADPH--hemoprotein reductase] + 2 H2O + H(+). The enzyme catalyses 4'-O-methylnorbelladine + reduced [NADPH--hemoprotein reductase] + O2 = (10bS,4aR)-noroxomaritidine + oxidized [NADPH--hemoprotein reductase] + 2 H2O + H(+). Its pathway is alkaloid biosynthesis. In terms of biological role, cytochrome P450 that catalyzes an intramolecular para-para' C-C phenol coupling of 4'-O-methylnorbelladine in alkaloids biosynthesis, including haemanthamine- and crinamine-type alkaloids, promising anticancer agents. Catalyzes the formation of (10bR,4aS)-noroxomaritidine and (10bS,4aR)-noroxomaritidine from 4'-O-methylnorbelladine. This chain is Noroxomaritidine synthase 2, found in Narcissus pseudonarcissus (Daffodil).